We begin with the raw amino-acid sequence, 1036 residues long: KAT8 regulatory NSL complex subunit 1 (1036 aa).

The residue at position 104 (Lys-104) is an N6-acetyllysine. Disordered regions lie at residues 145-211 (GQTA…CTLP) and 226-257 (NSTA…SSSN). The segment covering 226–244 (NSTANKSSVNSMDQPALQG) has biased composition (polar residues). Over residues 245-256 (SSRLSPSTDSSS) the composition is skewed to low complexity. At Ser-249 the chain carries Phosphoserine. Residue Lys-262 forms a Glycyl lysine isopeptide (Lys-Gly) (interchain with G-Cter in SUMO2) linkage. The residue at position 268 (Ser-268) is a Phosphoserine. Positions 285 to 312 (TALLRRQADIEIRARRLQKRLQVVQAKQ) form a coiled coil. Lys-331 is covalently cross-linked (Glycyl lysine isopeptide (Lys-Gly) (interchain with G-Cter in SUMO2)). Disordered regions lie at residues 399–423 (DSDV…RADP) and 739–787 (SPSY…RRRG). The span at 759–772 (STSSDTSTPTSSGS) shows a compositional bias: low complexity. Residues 781 to 813 (PVRRRRGESSFDINNIVIPMSVAATTRVEKLQY) are required for activation of KAT8 histone acetyltransferase activity. The PEHE domain maps to 815-966 (EILTPSWREV…GLDEQSVQPW (152 aa)). The interval 841 to 859 (EDLSDAAFAALHAKCEEME) is interaction with KAT8 HAT domain. Residues 869–931 (VPPQRRGSRS…SPISPELHSA (63 aa)) form a disordered region. Polar residues predominate over residues 886-896 (TTPQLGSANPS). Residues 906–919 (SSSHSLSEFSHGQS) show a composition bias toward low complexity. Phosphoserine is present on residues Ser-922 and Ser-925. Thr-934 is subject to Phosphothreonine. Ser-976 bears the Phosphoserine mark. Residues 989–1020 (DTAARCTRRTSGSKTGREAEVAPTSPPVVPLK) form a disordered region.

As to quaternary structure, component of the NSL complex at least composed of MOF/KAT8, KANSL1, KANSL2, KANSL3, MCRS1, PHF20, OGT1/OGT, WDR5 and HCFC1. Interacts (via PEHE domain) with KAT8 (via HAT domain); the interaction is direct. Component of some MLL1/MLL complex, at least composed of the core components KMT2A/MLL1, ASH2L, HCFC1, WDR5 and RBBP5, as well as the facultative components BACC1, CHD8, E2F6, HSP70, INO80C, KANSL1, LAS1L, MAX, MCRS1, MGA, KAT8/MOF, PELP1, PHF20, PRP31, RING2, RUVB1/TIP49A, RUVB2/TIP49B, SENP3, TAF1, TAF4, TAF6, TAF7, TAF9 and TEX10.

It is found in the nucleus. The protein localises to the chromosome. Its subcellular location is the centromere. The protein resides in the kinetochore. It localises to the mitochondrion. It is found in the cytoplasm. The protein localises to the cytoskeleton. Its subcellular location is the spindle pole. In terms of biological role, non-catalytic component of the NSL histone acetyltransferase complex, a multiprotein complex that mediates histone H4 acetylation at 'Lys-5'- and 'Lys-8' (H4K5ac and H4K8ac) at transcription start sites and promotes transcription initiation. The NSL complex also acts as a regulator of gene expression in mitochondria. In addition to its role in transcription, KANSL1 also plays an essential role in spindle assembly during mitosis. Associates with microtubule ends and contributes to microtubule stability. This is KAT8 regulatory NSL complex subunit 1 (Kansl1) from Mus musculus (Mouse).